Reading from the N-terminus, the 486-residue chain is Glycogen synthase (486 aa).

ADP-alpha-D-glucose is bound at residue K15.

It belongs to the glycosyltransferase 1 family. Bacterial/plant glycogen synthase subfamily.

The enzyme catalyses [(1-&gt;4)-alpha-D-glucosyl](n) + ADP-alpha-D-glucose = [(1-&gt;4)-alpha-D-glucosyl](n+1) + ADP + H(+). The protein operates within glycan biosynthesis; glycogen biosynthesis. Synthesizes alpha-1,4-glucan chains using ADP-glucose. In Thermotoga maritima (strain ATCC 43589 / DSM 3109 / JCM 10099 / NBRC 100826 / MSB8), this protein is Glycogen synthase.